We begin with the raw amino-acid sequence, 388 residues long: Alanine racemase 2 (388 aa).

Lysine 39 (proton acceptor; specific for D-alanine) is an active-site residue. The residue at position 39 (lysine 39) is an N6-(pyridoxal phosphate)lysine. Residue arginine 137 participates in substrate binding. Tyrosine 267 acts as the Proton acceptor; specific for L-alanine in catalysis. Residue methionine 315 participates in substrate binding.

Belongs to the alanine racemase family. It depends on pyridoxal 5'-phosphate as a cofactor.

The enzyme catalyses L-alanine = D-alanine. It functions in the pathway amino-acid biosynthesis; D-alanine biosynthesis; D-alanine from L-alanine: step 1/1. In terms of biological role, catalyzes the interconversion of L-alanine and D-alanine. May also act on other amino acids. The chain is Alanine racemase 2 (alr2) from Caldanaerobacter subterraneus subsp. tengcongensis (strain DSM 15242 / JCM 11007 / NBRC 100824 / MB4) (Thermoanaerobacter tengcongensis).